Here is an 856-residue protein sequence, read N- to C-terminus: Protein translocase subunit SecA (856 aa).

ATP contacts are provided by residues glutamine 77, 95-99 (GEGKT), and aspartate 534.

It belongs to the SecA family. In terms of assembly, monomer and homodimer. Part of the essential Sec protein translocation apparatus which comprises SecA, SecYEG and auxiliary proteins SecDF. Other proteins may also be involved.

The protein resides in the cell inner membrane. Its subcellular location is the cytoplasm. It catalyses the reaction ATP + H2O + cellular proteinSide 1 = ADP + phosphate + cellular proteinSide 2.. In terms of biological role, part of the Sec protein translocase complex. Interacts with the SecYEG preprotein conducting channel. Has a central role in coupling the hydrolysis of ATP to the transfer of proteins into and across the cell membrane, serving as an ATP-driven molecular motor driving the stepwise translocation of polypeptide chains across the membrane. The sequence is that of Protein translocase subunit SecA from Thermosipho africanus (strain TCF52B).